Consider the following 149-residue polypeptide: Putative eggshell protein (149 aa).

6 consecutive repeat copies span residues 1–5 (YGYDK), 6–10 (YGYDK), 11–15 (YGYDK), 16–20 (YGYDK), 21–25 (YGYDK), and 26–30 (YGYEK). The interval 1 to 64 (YGYDKYGYDK…YGYDKYGDDK (64 aa)) is 13 X 5 AA approximate tandem repeats of Y-G-Y-[DE]-K. The 7; truncated repeat unit spans residues 31 to 34 (GYDK). 3 repeat units span residues 35 to 39 (YGYDK), 40 to 44 (YGYEK), and 45 to 49 (YGYDK). Residues 50–54 (YGNEK) form an 11; approximate repeat. Copy 12 of the repeat occupies 55–59 (YGYDK). One copy of the 13; approximate repeat lies at 60–64 (YGDDK). Basic and acidic residues predominate over residues 105–124 (YRKDHDKHDHDEHDHHDDHH). The tract at residues 105–149 (YRKDHDKHDHDEHDHHDDHHDHRHHHHEHDHHHHHEHDHKNGKGY) is disordered. Positions 125–141 (DHRHHHHEHDHHHHHEH) are enriched in basic residues.

The polypeptide is Putative eggshell protein (Schistosoma mansoni (Blood fluke)).